Consider the following 2566-residue polypeptide: Highly reducing polyketide synthase verA (2566 aa).

The Ketosynthase family 3 (KS3) domain maps to 3 to 440 (PEPIAIIGTG…GTNAHAILES (438 aa)). A disordered region spans residues 35–61 (VASEPPSTRFDNRSFYDPDPSHPGTTN). Over residues 44 to 54 (FDNRSFYDPDP) the composition is skewed to basic and acidic residues. Catalysis depends on for beta-ketoacyl synthase activity residues Cys176, His316, and His360. The interval 554-880 (IFTGQGAQWP…IGLSNRGASG (327 aa)) is malonyl-CoA:ACP transacylase (MAT) domain. Ser648 (for malonyltransferase activity) is an active-site residue. Residues 950–1081 (HPLLGSLEAD…GKLLICWGNP (132 aa)) are N-terminal hotdog fold. The segment at 950–1246 (HPLLGSLEAD…EGVHISPLGP (297 aa)) is dehydratase (DH) domain. The 301-residue stretch at 950–1250 (HPLLGSLEAD…ISPLGPPDRQ (301 aa)) folds into the PKS/mFAS DH domain. His982 (proton acceptor; for dehydratase activity) is an active-site residue. Positions 1096–1250 (AGAVDIKDFY…ISPLGPPDRQ (155 aa)) are C-terminal hotdog fold. Catalysis depends on Asp1156, which acts as the Proton donor; for dehydratase activity. Positions 1386-1581 (DVLSRFYKED…TGFGGIDTIT (196 aa)) are methyltransferase (CMet) domain. Residues 2127 to 2294 (KTYLLVGMTG…RRARNIVGSI (168 aa)) are ketoreductase (KR) domain. The Carrier domain maps to 2411 to 2489 (EAAEIVAAGL…ALTADSVSKL (79 aa)). Position 2449 is an O-(pantetheine 4'-phosphoryl)serine (Ser2449). Residues 2505–2540 (KDVSGLTSPPEVPSDASRSSVSSGMDEIVTPESPSF) form a disordered region. Over residues 2518-2527 (SDASRSSVSS) the composition is skewed to low complexity.

It depends on pantetheine 4'-phosphate as a cofactor.

Its pathway is secondary metabolite biosynthesis; terpenoid biosynthesis. It participates in mycotoxin biosynthesis. In terms of biological role, highly reducing polyketide synthase (HR-PKS); part of the gene cluster that mediates the biosynthesis of the neurotoxin verrucosidin, a methylated alpha-pyrone polyketide that inhibits oxidative phosphorylation in mitochondria and thereby causes neurological diseases. The carbon backbone of verrucosidin is synthesized by the HR-PKS verA, and further modified by the other verrucodidin cluster enzymes. This is Highly reducing polyketide synthase verA from Penicillium polonicum.